The following is a 465-amino-acid chain: tRNA-2-methylthio-N(6)-dimethylallyladenosine synthase (465 aa).

The 116-residue stretch at 26 to 141 folds into the MTTase N-terminal domain; sequence MRAHIITYGC…LPEALKANER (116 aa). [4Fe-4S] cluster contacts are provided by C35, C71, C104, C173, C177, and C180. Positions 159 to 388 constitute a Radical SAM core domain; it reads PKGALSAHVT…IEKQKEWSYR (230 aa). A TRAM domain is found at 391–453; the sequence is LEWVGKTVEV…PHLLFGEVVG (63 aa).

This sequence belongs to the methylthiotransferase family. MiaB subfamily. Monomer. [4Fe-4S] cluster serves as cofactor.

It is found in the cytoplasm. It carries out the reaction N(6)-dimethylallyladenosine(37) in tRNA + (sulfur carrier)-SH + AH2 + 2 S-adenosyl-L-methionine = 2-methylsulfanyl-N(6)-dimethylallyladenosine(37) in tRNA + (sulfur carrier)-H + 5'-deoxyadenosine + L-methionine + A + S-adenosyl-L-homocysteine + 2 H(+). Its function is as follows. Catalyzes the methylthiolation of N6-(dimethylallyl)adenosine (i(6)A), leading to the formation of 2-methylthio-N6-(dimethylallyl)adenosine (ms(2)i(6)A) at position 37 in tRNAs that read codons beginning with uridine. The sequence is that of tRNA-2-methylthio-N(6)-dimethylallyladenosine synthase from Thermus thermophilus (strain ATCC BAA-163 / DSM 7039 / HB27).